The primary structure comprises 226 residues: Probable chemoreceptor glutamine deamidase CheD (226 aa).

The tract at residues 207-226 is disordered; that stretch reads PGGMRVERFDTPSRRDPVGA.

Belongs to the CheD family.

It catalyses the reaction L-glutaminyl-[protein] + H2O = L-glutamyl-[protein] + NH4(+). In terms of biological role, probably deamidates glutamine residues to glutamate on methyl-accepting chemotaxis receptors (MCPs), playing an important role in chemotaxis. This Bordetella bronchiseptica (strain ATCC BAA-588 / NCTC 13252 / RB50) (Alcaligenes bronchisepticus) protein is Probable chemoreceptor glutamine deamidase CheD.